The sequence spans 353 residues: Sphingosine 1-phosphate receptor 2 (353 aa).

Topologically, residues 1–34 (MGSLYSEYLNPNKVQEHYNYTKETLETQETTSRQ) are extracellular. N-linked (GlcNAc...) asparagine glycosylation is present at N19. The helical transmembrane segment at 35–59 (VASAFIVILCCAIVVENLLVLIAVA) threads the bilayer. Residues 60-66 (RNSKFHS) lie on the Cytoplasmic side of the membrane. A helical transmembrane segment spans residues 67–95 (AMYLFLGNLAASDLLAGVAFVANTLLSGS). Over 96-109 (VTLRLTPVQWFARE) the chain is Extracellular. The chain crosses the membrane as a helical span at residues 110 to 128 (GSAFITLSASVFSLLAIAI). Over 129 to 147 (ERHVAIAKVKLYGSDKSCR) the chain is Cytoplasmic. Residues 148-173 (MLLLIGASWLISLVLGGLPILGWNCL) traverse the membrane as a helical segment. The Extracellular portion of the chain corresponds to 174–189 (GHLEACSTVLPLYAKH). A helical transmembrane segment spans residues 190–210 (YVLCVVTIFSIILLAIVALYV). Over 211 to 233 (RIYCVVRSSHADMAAPQTLALLK) the chain is Cytoplasmic. Residues 234–255 (TVTIVLGVFIVCWLPAFSILLL) form a helical membrane-spanning segment. Residues 256 to 271 (DYACPVHSCPILYKAH) lie on the Extracellular side of the membrane. A helical membrane pass occupies residues 272-292 (YFFAVSTLNSLLNPVIYTWRS). Residues 293-353 (RDLRREVLRP…PTFLEGNTVV (61 aa)) lie on the Cytoplasmic side of the membrane. C305 is lipidated: S-palmitoyl cysteine.

Belongs to the G-protein coupled receptor 1 family.

It is found in the cell membrane. In terms of biological role, receptor for the lysosphingolipid sphingosine 1-phosphate (S1P). S1P is a bioactive lysophospholipid that elicits diverse physiological effects on most types of cells and tissues. When expressed in rat HTC4 hepatoma cells, is capable of mediating S1P-induced cell proliferation and suppression of apoptosis. Receptor for the chemokine-like protein FAM19A5. Mediates the inhibitory effect of FAM19A5 on vascular smooth muscle cell proliferation and migration. In lymphoid follicles, couples the binding of S1P to the activation of GNA13 and downstream inhibition of AKT activation leading to suppression of germinal center (GC) B cell growth and migration outside the GC niche. The sequence is that of Sphingosine 1-phosphate receptor 2 (S1PR2) from Homo sapiens (Human).